The following is a 185-amino-acid chain: ATP synthase subunit b, chloroplastic (185 aa).

A helical membrane pass occupies residues Ile31–Leu53.

This sequence belongs to the ATPase B chain family. In terms of assembly, F-type ATPases have 2 components, F(1) - the catalytic core - and F(0) - the membrane proton channel. F(1) has five subunits: alpha(3), beta(3), gamma(1), delta(1), epsilon(1). F(0) has four main subunits: a(1), b(1), b'(1) and c(10-14). The alpha and beta chains form an alternating ring which encloses part of the gamma chain. F(1) is attached to F(0) by a central stalk formed by the gamma and epsilon chains, while a peripheral stalk is formed by the delta, b and b' chains.

It localises to the plastid. The protein resides in the chloroplast thylakoid membrane. F(1)F(0) ATP synthase produces ATP from ADP in the presence of a proton or sodium gradient. F-type ATPases consist of two structural domains, F(1) containing the extramembraneous catalytic core and F(0) containing the membrane proton channel, linked together by a central stalk and a peripheral stalk. During catalysis, ATP synthesis in the catalytic domain of F(1) is coupled via a rotary mechanism of the central stalk subunits to proton translocation. In terms of biological role, component of the F(0) channel, it forms part of the peripheral stalk, linking F(1) to F(0). The sequence is that of ATP synthase subunit b, chloroplastic from Gnetum parvifolium (Small-leaved jointfir).